The primary structure comprises 312 residues: Acetyl-coenzyme A carboxylase carboxyl transferase subunit alpha (312 aa).

Residues 36–286 (RLDKEVKSIY…KEYFLDALRT (251 aa)) form the CoA carboxyltransferase C-terminal domain.

It belongs to the AccA family. In terms of assembly, acetyl-CoA carboxylase is a heterohexamer composed of biotin carboxyl carrier protein (AccB), biotin carboxylase (AccC) and two subunits each of ACCase subunit alpha (AccA) and ACCase subunit beta (AccD).

It localises to the cytoplasm. It catalyses the reaction N(6)-carboxybiotinyl-L-lysyl-[protein] + acetyl-CoA = N(6)-biotinyl-L-lysyl-[protein] + malonyl-CoA. Its pathway is lipid metabolism; malonyl-CoA biosynthesis; malonyl-CoA from acetyl-CoA: step 1/1. Component of the acetyl coenzyme A carboxylase (ACC) complex. First, biotin carboxylase catalyzes the carboxylation of biotin on its carrier protein (BCCP) and then the CO(2) group is transferred by the carboxyltransferase to acetyl-CoA to form malonyl-CoA. This is Acetyl-coenzyme A carboxylase carboxyl transferase subunit alpha from Helicobacter pylori (strain ATCC 700392 / 26695) (Campylobacter pylori).